A 385-amino-acid polypeptide reads, in one-letter code: Lipid-A-disaccharide synthase 2 (385 aa).

This sequence belongs to the LpxB family.

The catalysed reaction is a lipid X + a UDP-2-N,3-O-bis[(3R)-3-hydroxyacyl]-alpha-D-glucosamine = a lipid A disaccharide + UDP + H(+). Its pathway is bacterial outer membrane biogenesis; LPS lipid A biosynthesis. In terms of biological role, condensation of UDP-2,3-diacylglucosamine and 2,3-diacylglucosamine-1-phosphate to form lipid A disaccharide, a precursor of lipid A, a phosphorylated glycolipid that anchors the lipopolysaccharide to the outer membrane of the cell. This is Lipid-A-disaccharide synthase 2 from Legionella pneumophila subsp. pneumophila (strain Philadelphia 1 / ATCC 33152 / DSM 7513).